A 714-amino-acid chain; its full sequence is Palmitoyltransferase ZDHHC5 (714 aa).

Residues 1–13 (MPAESAKRFKPSK) are Cytoplasmic-facing. The helical transmembrane segment at 14-34 (YVPVSAAAIFLVGATTLFFAF) threads the bilayer. Residues 35-52 (TCPGLSLSVSPAVPVYNA) are Extracellular-facing. The helical transmembrane segment at 53 to 73 (VVFLFVLANFSMATFMDPGVF) threads the bilayer. Residues 74–148 (PRAEEDEDKE…NCIGRRNYRY (75 aa)) are Cytoplasmic-facing. Tyrosine 91 carries the post-translational modification Phosphotyrosine. Positions 104–154 (KWCATCRFYRPPRCSHCSVCDNCVEEFDHHCPWVNNCIGRRNYRYFFLFLL) constitute a DHHC domain. The S-palmitoyl cysteine intermediate role is filled by cysteine 134. A helical transmembrane segment spans residues 149–169 (FFLFLLSLTAHITGVFGFGLL). Over 170 to 191 (YVLYHMEELSGVRTAVTMAVMC) the chain is Extracellular. The chain crosses the membrane as a helical span at residues 192–212 (VAGLFFIPVAGLTGFHVVLVA). Residues 213-714 (RGRTTNEQVT…VGGTTYEISV (502 aa)) lie on the Cytoplasmic side of the membrane. Position 247 is a phosphoserine (serine 247). The segment at 289–714 (GELRRTKSKG…VGGTTYEISV (426 aa)) is disordered. Position 294 is a phosphothreonine (threonine 294). Serine 296 and serine 299 each carry phosphoserine. Threonine 303 is subject to Phosphothreonine. Serine 345 bears the Phosphoserine mark. Phosphothreonine is present on residues threonine 348 and threonine 350. Over residues 359 to 373 (SSSSASAAMPHSSSA) the composition is skewed to low complexity. Serine 380, serine 398, serine 406, and serine 409 each carry phosphoserine. Residues 388–398 (AESSRQPSYRS) are compositionally biased toward polar residues. Threonine 411 carries the phosphothreonine modification. Residues 422 to 432 (SSGSRSSSLKS) are compositionally biased toward low complexity. Phosphoserine occurs at positions 425, 429, and 432. Threonine 436 carries the phosphothreonine modification. Positions 445 to 478 (SIRSEGTTSTSYKSLANQTRNGSLSYDSLLTPSD) are enriched in polar residues. Residues serine 529 and serine 554 each carry the phosphoserine modification. Arginine 616 carries the post-translational modification Omega-N-methylarginine. Serine 620 carries the post-translational modification Phosphoserine. Phosphothreonine is present on threonine 658. Positions 667-678 (TAYSKSNGQPKS) are enriched in polar residues. The segment covering 683–692 (PPGPGQPPLS) has biased composition (pro residues). The residue at position 693 (serine 693) is a Phosphoserine. Arginine 696 bears the Omega-N-methylarginine mark.

The protein belongs to the DHHC palmitoyltransferase family. ERF2/ZDHHC9 subfamily. Post-translationally, phosphorylation regulates association with endocytic proteins and its subcellular localization. Phosphorylation by LYN during fatty acid uptake leads to inactivation of the activity. In terms of processing, autopalmitoylated. Palmitoylation of the C-terminal tail regulates stimulation-dependent plasma membrane motility.

The protein resides in the cell membrane. The enzyme catalyses L-cysteinyl-[protein] + hexadecanoyl-CoA = S-hexadecanoyl-L-cysteinyl-[protein] + CoA. In terms of biological role, palmitoyltransferase that catalyzes the addition of palmitate onto various protein substrates such as CTNND2, CD36, GSDMD, NLRP3, NOD1, NOD2, STAT3 and S1PR1 thus plays a role in various biological processes including cell adhesion, inflammation, fatty acid uptake, bacterial sensing or cardiac functions. Plays an important role in the regulation of synapse efficacy by mediating palmitoylation of delta-catenin/CTNND2, thereby increasing synaptic delivery and surface stabilization of alpha-amino-3-hydroxy-5-methyl-4-isoxazole propionic acid receptors (AMPARs). Under basal conditions, remains at the synaptic membrane through FYN-mediated phosphorylation that prevents association with endocytic proteins. Neuronal activity enhances the internalization and trafficking of DHHC5 from spines to dendritic shafts where it palmitoylates delta-catenin/CTNND2. Regulates cell adhesion at the plasma membrane by palmitoylating GOLGA7B and DSG2. Plays a role in innate immune response by mediating the palmitoylation of NOD1 and NOD2 and their proper recruitment to the bacterial entry site and phagosomes. Also participates in fatty acid uptake by palmitoylating CD36 and thereby targeting it to the plasma membrane. Upon binding of fatty acids to CD36, gets phosphorylated by LYN leading to inactivation and subsequent CD36 caveolar endocytosis. Controls oligodendrocyte development by catalyzing STAT3 palmitoylation. Acts as a regulator of inflammatory response by mediating palmitoylation of NLRP3 and GSDMD. Palmitoylates NLRP3 to promote inflammasome assembly and activation. Activates pyroptosis by catalyzing palmitoylation of gasdermin-D (GSDMD), thereby promoting membrane translocation and pore formation of GSDMD. This Bos taurus (Bovine) protein is Palmitoyltransferase ZDHHC5 (ZDHHC5).